The sequence spans 182 residues: MEPTASGIFCNRMLSMVNSEDVNAIIQAQRHMLDRFEKTNEMLINFNGLSNVRLQQMNEHFLMHTRTLIEMKKDLDSIFRRIRALKGKVAKQYPEAFSNVSESSNLEDDDDEFDPIPASVATITTTATSEQSTESCDTSPDVISPTISCCSEDPSQEHTDTPTSDSHEQPVLRDEGPDSADI.

Over residues 124–135 (TTTATSEQSTES) the composition is skewed to low complexity. Positions 124 to 182 (TTTATSEQSTESCDTSPDVISPTISCCSEDPSQEHTDTPTSDSHEQPVLRDEGPDSADI) are disordered. The span at 155-176 (SQEHTDTPTSDSHEQPVLRDEG) shows a compositional bias: basic and acidic residues.

It belongs to the KXD1 family. Associates with the BLOC-1 complex.

The protein resides in the lysosome membrane. In terms of biological role, as part of a BORC-like complex may play a role in lysosomes movement and localization at the cell periphery. Associated with the cytosolic face of lysosomes, this complex may couple lysosomes to microtubule plus-end-directed kinesin motor. May also be involved in the biogenesis of lysosome-related organelles such as melanosomes. The polypeptide is KxDL motif-containing protein 1 (kxd1) (Danio rerio (Zebrafish)).